A 150-amino-acid polypeptide reads, in one-letter code: 6,7-dimethyl-8-ribityllumazine synthase (150 aa).

Residues F11, 42–44, and 73–75 each bind 5-amino-6-(D-ribitylamino)uracil; these read IFE and CAI. 78–79 lines the (2S)-2-hydroxy-3-oxobutyl phosphate pocket; it reads ES. The active-site Proton donor is H81. N106 serves as a coordination point for 5-amino-6-(D-ribitylamino)uracil. R120 is a binding site for (2S)-2-hydroxy-3-oxobutyl phosphate.

The protein belongs to the DMRL synthase family.

It catalyses the reaction (2S)-2-hydroxy-3-oxobutyl phosphate + 5-amino-6-(D-ribitylamino)uracil = 6,7-dimethyl-8-(1-D-ribityl)lumazine + phosphate + 2 H2O + H(+). Its pathway is cofactor biosynthesis; riboflavin biosynthesis; riboflavin from 2-hydroxy-3-oxobutyl phosphate and 5-amino-6-(D-ribitylamino)uracil: step 1/2. Catalyzes the formation of 6,7-dimethyl-8-ribityllumazine by condensation of 5-amino-6-(D-ribitylamino)uracil with 3,4-dihydroxy-2-butanone 4-phosphate. This is the penultimate step in the biosynthesis of riboflavin. The protein is 6,7-dimethyl-8-ribityllumazine synthase of Paramagnetospirillum magneticum (strain ATCC 700264 / AMB-1) (Magnetospirillum magneticum).